Reading from the N-terminus, the 293-residue chain is Proline iminopeptidase (293 aa).

In terms of domain architecture, AB hydrolase-1 spans 28–277 (KPLVLLHGGP…YSRHMPFVEE (250 aa)). S104 (nucleophile) is an active-site residue. Residue D244 is part of the active site. H271 (proton donor) is an active-site residue.

It belongs to the peptidase S33 family.

It carries out the reaction Release of N-terminal proline from a peptide.. Its function is as follows. Releases the N-terminal proline from various substrates. This is Proline iminopeptidase from Clostridioides difficile (strain 630) (Peptoclostridium difficile).